A 582-amino-acid polypeptide reads, in one-letter code: Formate--tetrahydrofolate ligase (582 aa).

65–72 (TPLGEGKT) serves as a coordination point for ATP.

Belongs to the formate--tetrahydrofolate ligase family.

It carries out the reaction (6S)-5,6,7,8-tetrahydrofolate + formate + ATP = (6R)-10-formyltetrahydrofolate + ADP + phosphate. It functions in the pathway one-carbon metabolism; tetrahydrofolate interconversion. The polypeptide is Formate--tetrahydrofolate ligase (Vibrio cholerae serotype O1 (strain ATCC 39315 / El Tor Inaba N16961)).